The following is a 356-amino-acid chain: Protein pelota homolog (356 aa).

It belongs to the eukaryotic release factor 1 family. Pelota subfamily. Monomer. A divalent metal cation is required as a cofactor.

It is found in the cytoplasm. Functionally, may function in recognizing stalled ribosomes, interact with stem-loop structures in stalled mRNA molecules, and effect endonucleolytic cleavage of the mRNA. May play a role in the release non-functional ribosomes and degradation of damaged mRNAs. Has endoribonuclease activity. This is Protein pelota homolog from Desulfurococcus amylolyticus (strain DSM 18924 / JCM 16383 / VKM B-2413 / 1221n) (Desulfurococcus kamchatkensis).